Reading from the N-terminus, the 329-residue chain is NADH-quinone oxidoreductase subunit H (329 aa).

Helical transmembrane passes span 9–29, 42–62, 75–95, 117–137, 154–174, 188–208, 238–258, 269–291, and 309–329; these read LIKILILVAVFSALGGFATYI, GPCYVGPFGLLQVAADGIKLF, FIFTLAPIIAMVSAFVSMAPI, IGFLFFLAVGAAGIYAPILAG, IQLLSFEVVSTLTILAPLMVV, GGFLDWLVFKQPLAFVLFLIA, LKWGMFFLAEYAHLFAFSFVI, WGFIPGGIAILIKAGFFVFLSMW, and WKIMLPLALLNIVLTGIIILI.

It belongs to the complex I subunit 1 family. In terms of assembly, NDH-1 is composed of 14 different subunits. Subunits NuoA, H, J, K, L, M, N constitute the membrane sector of the complex.

The protein resides in the cell inner membrane. It carries out the reaction a quinone + NADH + 5 H(+)(in) = a quinol + NAD(+) + 4 H(+)(out). In terms of biological role, NDH-1 shuttles electrons from NADH, via FMN and iron-sulfur (Fe-S) centers, to quinones in the respiratory chain. The immediate electron acceptor for the enzyme in this species is believed to be ubiquinone. Couples the redox reaction to proton translocation (for every two electrons transferred, four hydrogen ions are translocated across the cytoplasmic membrane), and thus conserves the redox energy in a proton gradient. This subunit may bind ubiquinone. The sequence is that of NADH-quinone oxidoreductase subunit H from Helicobacter pylori (strain P12).